We begin with the raw amino-acid sequence, 290 residues long: Cilia- and flagella-associated protein 298 (290 aa).

Belongs to the CFAP298 family. In terms of assembly, interacts with ZMYND10.

The protein resides in the cytoplasm. It localises to the cytoskeleton. Its subcellular location is the cilium basal body. In terms of biological role, plays a role in motile cilium function, possibly by acting on outer dynein arm assembly. Seems to be important for initiation rather than maintenance of cilium motility. Required for correct positioning of cilia at the apical cell surface, suggesting an additional role in the planar cell polarity (PCP) pathway. May suppress canonical Wnt signaling activity. The sequence is that of Cilia- and flagella-associated protein 298 from Mus musculus (Mouse).